We begin with the raw amino-acid sequence, 121 residues long: Small ribosomal subunit protein bS6 (121 aa).

The interval 102–121 is disordered; it reads MMRNVEREEARKAQQQEYAA. Residues 105–115 are compositionally biased toward basic and acidic residues; the sequence is NVEREEARKAQ.

It belongs to the bacterial ribosomal protein bS6 family.

Binds together with bS18 to 16S ribosomal RNA. The chain is Small ribosomal subunit protein bS6 from Polaromonas sp. (strain JS666 / ATCC BAA-500).